Here is a 147-residue protein sequence, read N- to C-terminus: Transthyretin (147 aa).

The first 20 residues, 1 to 20, serve as a signal peptide directing secretion; that stretch reads MASHRLLLLCLAGLVFVSEA. Cys30 carries the sulfocysteine modification. Lys35 serves as a coordination point for L-thyroxine. At Glu62 the chain carries 4-carboxyglutamate; in a patient with Moyamoya disease. At Ser72 the chain carries Phosphoserine. An L-thyroxine-binding site is contributed by Glu74. An N-linked (GlcNAc...) asparagine glycan is attached at Asn118. Ser137 is an L-thyroxine binding site.

This sequence belongs to the transthyretin family. Homotetramer. Dimer of dimers. In the homotetramer, subunits assemble around a central channel that can accommodate two ligand molecules. Interacts with RBP4. In terms of processing, not glycosylated under normal conditions. Following unfolding, caused for example by variant AMYLD1 'Gly-38', the cryptic Asn-118 site is exposed and glycosylated by STT3B-containing OST complex, leading to its degradation by the ER-associated degradation (ERAD) pathway. Sulfonation of the reactive cysteine Cys-30 enhances the stability of the native conformation of TTR, avoiding misassembly of the protein leading to amyloid formation. As to expression, detected in serum and cerebrospinal fluid (at protein level). Highly expressed in choroid plexus epithelial cells. Detected in retina pigment epithelium and liver.

It localises to the secreted. It is found in the cytoplasm. In terms of biological role, thyroid hormone-binding protein. Probably transports thyroxine from the bloodstream to the brain. This is Transthyretin (TTR) from Homo sapiens (Human).